A 246-amino-acid chain; its full sequence is Proteasome subunit alpha (246 aa).

Belongs to the peptidase T1A family. The 20S proteasome core is composed of 14 alpha and 14 beta subunits that assemble into four stacked heptameric rings, resulting in a barrel-shaped structure. The two inner rings, each composed of seven catalytic beta subunits, are sandwiched by two outer rings, each composed of seven alpha subunits. The catalytic chamber with the active sites is on the inside of the barrel. Has a gated structure, the ends of the cylinder being occluded by the N-termini of the alpha-subunits. Is capped at one or both ends by the proteasome regulatory ATPase, PAN.

The protein localises to the cytoplasm. With respect to regulation, the formation of the proteasomal ATPase PAN-20S proteasome complex, via the docking of the C-termini of PAN into the intersubunit pockets in the alpha-rings, triggers opening of the gate for substrate entry. Interconversion between the open-gate and close-gate conformations leads to a dynamic regulation of the 20S proteasome proteolysis activity. Its function is as follows. Component of the proteasome core, a large protease complex with broad specificity involved in protein degradation. This Methanopyrus kandleri (strain AV19 / DSM 6324 / JCM 9639 / NBRC 100938) protein is Proteasome subunit alpha.